A 360-amino-acid polypeptide reads, in one-letter code: F-box protein SKP2A (360 aa).

The F-box domain occupies 25–71; sequence IKEWKDIPVELLMRILSLVDDRNVIVASGVCTGWRDAISFGLTRLRL. Residues 127-128, 149-152, 175-178, and Asn-202 each bind (indol-3-yl)acetate; these read SL, NLSG, and NLCG.

As to quaternary structure, part of a SCF (ASK-cullin-F-box) protein ligase complex. Interacts with CUL1 (RUB1-modified and non-modified isoforms), SKP1A, SKP1B and ASK18. Recruit DPB and phosphorylated E2FC. Interacts with auxin. Auxin controls the interaction with DPB. Polyubiquitinated and subsequently targeted to proteasome. Auxin promotes this ubiquitination-mediated degradation. In terms of tissue distribution, expressed in embryo, seedlings, hypocotyl, roots, leaves and flowers.

Its subcellular location is the nucleus. It participates in protein modification; protein ubiquitination. Its function is as follows. Component of SCF(SKP2A) E3 ubiquitin ligase complexes, which mediate the ubiquitination and subsequent proteasomal degradation of target proteins (including cell cycle repressors). Acts as an auxin receptor; one active auxin is indole-3-acetate. Regulates the stability of the transcription factors E2FC and DPB, repressors of cell proliferation. Confers increase tolerance to osmotic stress by promoting cell division, especially in meristems. Promotes the formation of lateral root primordia. The polypeptide is F-box protein SKP2A (SKP2A) (Arabidopsis thaliana (Mouse-ear cress)).